The chain runs to 82 residues: Small ribosomal subunit protein bS16 (82 aa).

It belongs to the bacterial ribosomal protein bS16 family.

This chain is Small ribosomal subunit protein bS16, found in Aliivibrio fischeri (strain ATCC 700601 / ES114) (Vibrio fischeri).